Reading from the N-terminus, the 430-residue chain is 3-phosphoshikimate 1-carboxyvinyltransferase (430 aa).

3-phosphoshikimate is bound by residues Lys23, Ser24, and Arg28. A phosphoenolpyruvate-binding site is contributed by Lys23. Phosphoenolpyruvate-binding residues include Gly95 and Arg123. The 3-phosphoshikimate site is built by Ser169, Gln171, Asp315, and Lys342. Gln171 is a binding site for phosphoenolpyruvate. Catalysis depends on Asp315, which acts as the Proton acceptor. Phosphoenolpyruvate contacts are provided by Arg346 and Arg388.

The protein belongs to the EPSP synthase family. In terms of assembly, monomer.

It localises to the cytoplasm. The catalysed reaction is 3-phosphoshikimate + phosphoenolpyruvate = 5-O-(1-carboxyvinyl)-3-phosphoshikimate + phosphate. It participates in metabolic intermediate biosynthesis; chorismate biosynthesis; chorismate from D-erythrose 4-phosphate and phosphoenolpyruvate: step 6/7. Catalyzes the transfer of the enolpyruvyl moiety of phosphoenolpyruvate (PEP) to the 5-hydroxyl of shikimate-3-phosphate (S3P) to produce enolpyruvyl shikimate-3-phosphate and inorganic phosphate. In Streptococcus pyogenes serotype M1, this protein is 3-phosphoshikimate 1-carboxyvinyltransferase.